Consider the following 438-residue polypeptide: Aspartate aminotransferase, cytoplasmic (438 aa).

Glycine 73, tryptophan 167, and asparagine 220 together coordinate L-aspartate. Lysine 284 is subject to N6-(pyridoxal phosphate)lysine. Residue arginine 412 coordinates L-aspartate.

Belongs to the class-I pyridoxal-phosphate-dependent aminotransferase family. Homodimer. Requires pyridoxal 5'-phosphate as cofactor.

It is found in the cytoplasm. It carries out the reaction L-aspartate + 2-oxoglutarate = oxaloacetate + L-glutamate. Its function is as follows. Plays a key role in amino acid metabolism. In Dictyostelium discoideum (Social amoeba), this protein is Aspartate aminotransferase, cytoplasmic (aatB).